A 1158-amino-acid polypeptide reads, in one-letter code: Nuclear receptor-interacting protein 1 (1158 aa).

The interval 1-415 (MTHGEELGSD…EESSTPTTID (415 aa)) is interaction with ZNF366. The LXXLL motif 1 signature appears at 21-25 (LEGLL). A disordered region spans residues 33-56 (SGTAVDKKSAGHNEEDQNFNISGS). Residues 37–47 (VDKKSAGHNEE) show a composition bias toward basic and acidic residues. The repression domain 1 stretch occupies residues 78–333 (MLHLKKARLL…HLNGQARTSS (256 aa)). The residue at position 104 (S104) is a Phosphoserine. K111 bears the N6-acetyllysine; alternate mark. K111 participates in a covalent cross-link: Glycyl lysine isopeptide (Lys-Gly) (interchain with G-Cter in SUMO2); alternate. Residues 133 to 137 (LASLL) carry the LXXLL motif 2 motif. An N6-acetyllysine modification is found at K158. Residue K170 forms a Glycyl lysine isopeptide (Lys-Gly) (interchain with G-Cter in SUMO2) linkage. Residues 185-189 (LKTLL) carry the LXXLL motif 3 motif. Residues K195 and K198 each participate in a glycyl lysine isopeptide (Lys-Gly) (interchain with G-Cter in SUMO2) cross-link. T207 carries the post-translational modification Phosphothreonine. S218 carries the phosphoserine modification. The short motif at 266 to 270 (LALLL) is the LXXLL motif 4 element. Residues K286 and K310 each carry the N6-acetyllysine modification. S356 carries the phosphoserine modification. Residue K372 forms a Glycyl lysine isopeptide (Lys-Gly) (interchain with G-Cter in SUMO2) linkage. The residue at position 378 (S378) is a Phosphoserine. The short motif at 380 to 384 (LLHLL) is the LXXLL motif 5 element. The segment at 393 to 435 (MNGHSHSERGSIFEESSTPTTIDEYSDNNPSFTDDSSGDESSY) is disordered. A compositionally biased stretch (polar residues) spans 406–435 (EESSTPTTIDEYSDNNPSFTDDSSGDESSY). Positions 410-700 (TPTTIDEYSD…PTGPEPGLSG (291 aa)) are repression domain 2. The required for targeting to small nuclear foci stretch occupies residues 431 to 472 (DESSYSNCVPIDLSCKHRTEKSESDQPVSLDNFTQSLLNTWD). Residues 440-446 (PIDLSCK) carry the CTBP-binding; principal site motif. Residues K446 and K481 each carry the N6-acetyllysine modification. Position 487 is a phosphoserine (S487). The LXXLL motif 6 motif lies at 500 to 504 (LLQLL). A Glycyl lysine isopeptide (Lys-Gly) (interchain with G-Cter in SUMO2) cross-link involves residue K508. S518 is modified (phosphoserine). N6-acetyllysine is present on K528. Residues 540-563 (IESPSTNRTTPVSTPPLLTSSKAG) are disordered. A Phosphoserine modification is found at S542. The span at 548 to 560 (TTPVSTPPLLTSS) shows a compositional bias: low complexity. A Phosphoserine modification is found at S564. 2 short sequence motifs (CTBP-binding) span residues 565-569 (PINLS) and 599-603 (SMDLT). Disordered stretches follow at residues 592 to 622 (TNTA…AQNS) and 641 to 663 (SSMS…DKPI). The span at 601–610 (DLTKSKDPPG) shows a compositional bias: basic and acidic residues. K606 carries the N6-acetyllysine modification. Positions 641-659 (SSMSVEEQRPSKQLLTGNT) are enriched in polar residues. The residue at position 671 (S671) is a Phosphoserine. The LXXLL motif 7 motif lies at 713–717 (LQLLL). Residues 716-745 (LLGNPNKGKSEKKEKTPLRDESTQEHSERA) form a disordered region. Residues 723-745 (GKSEKKEKTPLRDESTQEHSERA) are compositionally biased toward basic and acidic residues. A repression domain 3 region spans residues 735–885 (DESTQEHSER…NIVDAANNHS (151 aa)). The interval 753–1158 (VKIKSEPCDD…SVLTIKKESE (406 aa)) is interaction with ZNF366. Residues K756 and K802 each participate in a glycyl lysine isopeptide (Lys-Gly) (interchain with G-Cter in SUMO2) cross-link. S807 is subject to Phosphoserine. An LXXLL motif 8 motif is present at residues 819 to 823 (LSRLL). Residues K850 and K901 each participate in a glycyl lysine isopeptide (Lys-Gly) (interchain with G-Cter in SUMO2) cross-link. K931 is subject to N6-acetyllysine; alternate. A Glycyl lysine isopeptide (Lys-Gly) (interchain with G-Cter in SUMO2); alternate cross-link involves residue K931. The LXXLL motif 9 motif lies at 936–940 (LKQLL). Positions 946-950 (VRDLS) match the CTBP-binding motif. The disordered stretch occupies residues 950–974 (SPHRSNSVADSKKKGHKNNVTNSKP). Residue S1001 is modified to Phosphoserine. The Ligand-dependent nuclear receptor binding signature appears at 1061-1074 (LTKTNPILYYMLQK). Residues K1105, K1115, and K1154 each participate in a glycyl lysine isopeptide (Lys-Gly) (interchain with G-Cter in SUMO2) cross-link. The interval 1118–1158 (FFNLRSPYNSHMGNNASRPHSANGEVYGLLGSVLTIKKESE) is repression domain 4.

In terms of assembly, interacts with RARA and RXRB homodimers and RARA/RXRB heterodimers in the presence of ligand. Interacts with HDAC1 and HDAC3 via its N-terminal domain. Interacts with NR2C1 (sumoylated form and via the ligand-binding domain); the interaction results in promoting the repressor activity of NR2C1. Interacts with CTBP1, CTBP2, ESR1, HDAC1, HDAC2, HDAC5, HDAC6, NR2C2, NR3C1, NR3C2, YWHAH, JUN and FOS. Found in a complex with both NR3C1 and YWHAH. Interacts with ZNF366. Interacts with RORA. In terms of processing, acetylation regulates its nuclear translocation and corepressive activity. Acetylation abolishes interaction with CTBP1. Phosphorylation enhances interaction with YWHAH.

The protein localises to the nucleus. Functionally, modulates transcriptional activation by steroid receptors such as NR3C1, NR3C2 and ESR1. Also modulates transcriptional repression by nuclear hormone receptors. Positive regulator of the circadian clock gene expression: stimulates transcription of BMAL1, CLOCK and CRY1 by acting as a coactivator for RORA and RORC. Involved in the regulation of ovarian function. Plays a role in renal development. The protein is Nuclear receptor-interacting protein 1 (NRIP1) of Homo sapiens (Human).